The sequence spans 242 residues: Ribosomal RNA small subunit methyltransferase G (242 aa).

S-adenosyl-L-methionine-binding positions include glycine 81, phenylalanine 86, 104–106 (DST), 132–133 (AE), and arginine 151.

The protein belongs to the methyltransferase superfamily. RNA methyltransferase RsmG family.

It is found in the cytoplasm. In terms of biological role, specifically methylates the N7 position of a guanine in 16S rRNA. This Synechococcus elongatus (strain ATCC 33912 / PCC 7942 / FACHB-805) (Anacystis nidulans R2) protein is Ribosomal RNA small subunit methyltransferase G.